Reading from the N-terminus, the 63-residue chain is Large ribosomal subunit protein uL29 (63 aa).

Belongs to the universal ribosomal protein uL29 family.

The chain is Large ribosomal subunit protein uL29 from Shewanella denitrificans (strain OS217 / ATCC BAA-1090 / DSM 15013).